Consider the following 121-residue polypeptide: Basic phospholipase A2 BbTX-III (121 aa).

Residues tyrosine 27, glycine 29, and glycine 31 each contribute to the Ca(2+) site. Disulfide bonds link cysteine 28-cysteine 44, cysteine 43-cysteine 95, cysteine 49-cysteine 121, cysteine 50-cysteine 88, cysteine 58-cysteine 82, and cysteine 76-cysteine 86. The active site involves histidine 47. Aspartate 48 serves as a coordination point for Ca(2+). The active site involves aspartate 89.

It belongs to the phospholipase A2 family. Group II subfamily. D49 sub-subfamily. Homodimer; non-covalently linked. Ca(2+) is required as a cofactor. As to expression, expressed by the venom gland.

The protein localises to the secreted. The enzyme catalyses a 1,2-diacyl-sn-glycero-3-phosphocholine + H2O = a 1-acyl-sn-glycero-3-phosphocholine + a fatty acid + H(+). Functionally, snake venom phospholipase A2 (PLA2) that exhibits myotoxin and anticoagulant activity. Displays edema-inducing activities in mouse paw. Also displays cytotoxic activity against some cell lines and myotubes, and antimicrobial activities against E.coli, C.albicans and Leishmania. PLA2 catalyzes the calcium-dependent hydrolysis of the 2-acyl groups in 3-sn-phosphoglycerides. This Bothrops brazili (Brazil's lancehead) protein is Basic phospholipase A2 BbTX-III.